The chain runs to 316 residues: Beta-ketoacyl-[acyl-carrier-protein] synthase III 1 (316 aa).

Catalysis depends on residues C112 and H243. The tract at residues 244-248 (QANYR) is ACP-binding. N273 is a catalytic residue.

It belongs to the thiolase-like superfamily. FabH family. As to quaternary structure, homodimer.

It is found in the cytoplasm. The catalysed reaction is malonyl-[ACP] + acetyl-CoA + H(+) = 3-oxobutanoyl-[ACP] + CO2 + CoA. Its pathway is lipid metabolism; fatty acid biosynthesis. Catalyzes the condensation reaction of fatty acid synthesis by the addition to an acyl acceptor of two carbons from malonyl-ACP. Catalyzes the first condensation reaction which initiates fatty acid synthesis and may therefore play a role in governing the total rate of fatty acid production. Possesses both acetoacetyl-ACP synthase and acetyl transacylase activities. Its substrate specificity determines the biosynthesis of branched-chain and/or straight-chain of fatty acids. This chain is Beta-ketoacyl-[acyl-carrier-protein] synthase III 1, found in Vibrio cholerae serotype O1 (strain ATCC 39315 / El Tor Inaba N16961).